The chain runs to 254 residues: MTREFIMLMMPPLTDGFPLDILVANVVACFLLGTVTALYARKIHSRDVHTIIGMGMMGGVSTFSSFAYGSVVLASASMSAFLIAAAYVTVSVVAGYVAVLAGMKFGEKSADILHRYPPMASIIDSGLVTVESRHSVAETIERVAAKAKSMGMNVFTRVDHGAGAKEAGLGLPPTELIIFGNPQNGTVLMQDKRTIGLDLPIRALAWEDGSGKVWLTVNDPAWLAQRHSLGLSSDVAIKAMVTGTGTVTKYAAGD.

The next 3 helical transmembrane spans lie at 19 to 39, 51 to 71, and 80 to 100; these read LDIL…TALY, IIGM…YGSV, and AFLI…VAVL. 2 residues coordinate Na(+): G58 and S61.

It belongs to the fluoride channel Fluc/FEX (TC 1.A.43) family.

The protein resides in the cell inner membrane. The enzyme catalyses fluoride(in) = fluoride(out). Na(+) is not transported, but it plays an essential structural role and its presence is essential for fluoride channel function. Fluoride-specific ion channel. Important for reducing fluoride concentration in the cell, thus reducing its toxicity. The chain is Fluoride-specific ion channel FluC 1 from Brucella suis biovar 1 (strain 1330).